Reading from the N-terminus, the 558-residue chain is Dihydroxy-acid dehydratase (558 aa).

D81 is a Mg(2+) binding site. C122 provides a ligand contact to [2Fe-2S] cluster. Positions 123 and 124 each coordinate Mg(2+). K124 is modified (N6-carboxylysine). C195 contributes to the [2Fe-2S] cluster binding site. E447 lines the Mg(2+) pocket. S473 functions as the Proton acceptor in the catalytic mechanism.

Belongs to the IlvD/Edd family. In terms of assembly, homodimer. Requires [2Fe-2S] cluster as cofactor. Mg(2+) is required as a cofactor.

It carries out the reaction (2R)-2,3-dihydroxy-3-methylbutanoate = 3-methyl-2-oxobutanoate + H2O. The catalysed reaction is (2R,3R)-2,3-dihydroxy-3-methylpentanoate = (S)-3-methyl-2-oxopentanoate + H2O. Its pathway is amino-acid biosynthesis; L-isoleucine biosynthesis; L-isoleucine from 2-oxobutanoate: step 3/4. It participates in amino-acid biosynthesis; L-valine biosynthesis; L-valine from pyruvate: step 3/4. Functions in the biosynthesis of branched-chain amino acids. Catalyzes the dehydration of (2R,3R)-2,3-dihydroxy-3-methylpentanoate (2,3-dihydroxy-3-methylvalerate) into 2-oxo-3-methylpentanoate (2-oxo-3-methylvalerate) and of (2R)-2,3-dihydroxy-3-methylbutanoate (2,3-dihydroxyisovalerate) into 2-oxo-3-methylbutanoate (2-oxoisovalerate), the penultimate precursor to L-isoleucine and L-valine, respectively. This is Dihydroxy-acid dehydratase from Bacillus pumilus (strain SAFR-032).